The chain runs to 205 residues: Phosphoenolpyruvate guanylyltransferase (205 aa).

Phosphoenolpyruvate-binding residues include Thr138, Gly154, and Ser157.

This sequence belongs to the CofC family.

The enzyme catalyses phosphoenolpyruvate + GTP + H(+) = enolpyruvoyl-2-diphospho-5'-guanosine + diphosphate. Its pathway is cofactor biosynthesis; coenzyme F420 biosynthesis. In terms of biological role, guanylyltransferase that catalyzes the activation of phosphoenolpyruvate (PEP) as enolpyruvoyl-2-diphospho-5'-guanosine, via the condensation of PEP with GTP. It is involved in the biosynthesis of coenzyme F420, a hydride carrier cofactor. This chain is Phosphoenolpyruvate guanylyltransferase, found in Chloroflexus aurantiacus (strain ATCC 29364 / DSM 637 / Y-400-fl).